The following is a 189-amino-acid chain: Protein GrpE (189 aa).

The segment covering 1–38 (MTKSNETERMEESEETHSSDIRSASESDHASGSDHTES) has biased composition (basic and acidic residues). The disordered stretch occupies residues 1 to 54 (MTKSNETERMEESEETHSSDIRSASESDHASGSDHTESADEIPTADAEQGELEQ).

The protein belongs to the GrpE family. As to quaternary structure, homodimer.

The protein resides in the cytoplasm. Functionally, participates actively in the response to hyperosmotic and heat shock by preventing the aggregation of stress-denatured proteins, in association with DnaK and GrpE. It is the nucleotide exchange factor for DnaK and may function as a thermosensor. Unfolded proteins bind initially to DnaJ; upon interaction with the DnaJ-bound protein, DnaK hydrolyzes its bound ATP, resulting in the formation of a stable complex. GrpE releases ADP from DnaK; ATP binding to DnaK triggers the release of the substrate protein, thus completing the reaction cycle. Several rounds of ATP-dependent interactions between DnaJ, DnaK and GrpE are required for fully efficient folding. The chain is Protein GrpE from Tropheryma whipplei (strain Twist) (Whipple's bacillus).